We begin with the raw amino-acid sequence, 579 residues long: DBIRD complex subunit ZNF326 (579 aa).

A mediates transcriptional activation region spans residues 1–124; sequence MDFEDDYTHS…YRNSLDSFGG (124 aa). Phosphoserine occurs at positions 48, 56, 63, 69, 81, 82, 91, 106, 114, 118, 121, and 137. Lysine 140 participates in a covalent cross-link: Glycyl lysine isopeptide (Lys-Gly) (interchain with G-Cter in SUMO2). The interval 154–194 is disordered; it reads YSSYSSFSSPHMKPAPVGSRGRGTPAYPESTFGSRNYDAFG. Arginine 173 carries the post-translational modification Omega-N-methylarginine. Residue serine 212 is modified to Phosphoserine. Arginine 235 is subject to Omega-N-methylarginine. The Bipartite nuclear localization signal motif lies at 238 to 260; it reads KRKMIQPFNKPGGTFIKKPKLAK. Residue lysine 240 forms a Glycyl lysine isopeptide (Lys-Gly) (interchain with G-Cter in SUMO2) linkage. The residue at position 247 (lysine 247) is an N6-acetyllysine; alternate. Lysine 247 is covalently cross-linked (Glycyl lysine isopeptide (Lys-Gly) (interchain with G-Cter in SUMO2); alternate). The segment at 248 to 302 is disordered; that stretch reads PGGTFIKKPKLAKPVEKMSLSKSPTKTDPKNEEEEKRRIEARREKQRRRREKNSE. A Phosphothreonine modification is found at threonine 251. Glycyl lysine isopeptide (Lys-Gly) (interchain with G-Cter in SUMO2) cross-links involve residues lysine 254 and lysine 264. A Phosphoserine modification is found at serine 270. The segment covering 272–290 has biased composition (basic and acidic residues); the sequence is TKTDPKNEEEEKRRIEARR. The C2H2 AKAP95-type 1 zinc finger occupies 314–336; sequence CSFCKFRTFEEKDIELHLESASH. Lysine 401 is covalently cross-linked (Glycyl lysine isopeptide (Lys-Gly) (interchain with G-Cter in SUMO2)). The C2H2 AKAP95-type 2 zinc-finger motif lies at 407–430; sequence CSACSVYIPALHSSVQQHLKSPDH. Residues lysine 459 and lysine 467 each participate in a glycyl lysine isopeptide (Lys-Gly) (interchain with G-Cter in SUMO2) cross-link. A disordered region spans residues 470 to 579; it reads NPFEIQDHSQ…GFSVDQAEEN (110 aa). Composition is skewed to acidic residues over residues 483-520, 529-541, and 549-565; these read IEGDEEEEEKIDEPVEEEEEEEEEEEEVGEVEEAEEVG, GDTEEGGDVEGEG, and GEGEGEGVGEVEEEEAK.

It belongs to the AKAP95 family. As to quaternary structure, component of the DBIRD complex. Interacts with CCAR2; the interaction is direct.

The protein localises to the nucleus matrix. Its function is as follows. Core component of the DBIRD complex, a multiprotein complex that acts at the interface between core mRNP particles and RNA polymerase II (RNAPII) and integrates transcript elongation with the regulation of alternative splicing: the DBIRD complex affects local transcript elongation rates and alternative splicing of a large set of exons embedded in (A + T)-rich DNA regions. May play a role in neuronal differentiation and is able to bind DNA and activate expression in vitro. The sequence is that of DBIRD complex subunit ZNF326 (ZNF326) from Bos taurus (Bovine).